Here is a 446-residue protein sequence, read N- to C-terminus: 5-methylthioadenosine/S-adenosylhomocysteine deaminase (446 aa).

Positions 72 and 74 each coordinate Zn(2+). The substrate site is built by E101 and H194. Residue H221 participates in Zn(2+) binding. Positions 224 and 309 each coordinate substrate. D309 contributes to the Zn(2+) binding site.

This sequence belongs to the metallo-dependent hydrolases superfamily. MTA/SAH deaminase family. Zn(2+) is required as a cofactor.

The enzyme catalyses S-adenosyl-L-homocysteine + H2O + H(+) = S-inosyl-L-homocysteine + NH4(+). It carries out the reaction S-methyl-5'-thioadenosine + H2O + H(+) = S-methyl-5'-thioinosine + NH4(+). Catalyzes the deamination of 5-methylthioadenosine and S-adenosyl-L-homocysteine into 5-methylthioinosine and S-inosyl-L-homocysteine, respectively. Is also able to deaminate adenosine. This chain is 5-methylthioadenosine/S-adenosylhomocysteine deaminase, found in Saccharophagus degradans (strain 2-40 / ATCC 43961 / DSM 17024).